A 546-amino-acid chain; its full sequence is Arginine--tRNA ligase (546 aa).

Positions 117-127 match the 'HIGH' region motif; that stretch reads ANPTGPLHIGR.

This sequence belongs to the class-I aminoacyl-tRNA synthetase family.

It localises to the cytoplasm. The catalysed reaction is tRNA(Arg) + L-arginine + ATP = L-arginyl-tRNA(Arg) + AMP + diphosphate. This Thermoplasma acidophilum (strain ATCC 25905 / DSM 1728 / JCM 9062 / NBRC 15155 / AMRC-C165) protein is Arginine--tRNA ligase.